The chain runs to 341 residues: Dihydroorotate dehydrogenase (quinone) (341 aa).

Residues 59 to 63 and threonine 83 each bind FMN; that span reads AGLDK. Lysine 63 contacts substrate. Residue 108–112 coordinates substrate; sequence NRMGF. Asparagine 136 and asparagine 169 together coordinate FMN. Asparagine 169 contacts substrate. Serine 172 acts as the Nucleophile in catalysis. Residue asparagine 174 coordinates substrate. 2 residues coordinate FMN: lysine 214 and threonine 242. 243–244 lines the substrate pocket; the sequence is NT. FMN contacts are provided by residues glycine 265, glycine 294, and 315 to 316; that span reads YS.

The protein belongs to the dihydroorotate dehydrogenase family. Type 2 subfamily. In terms of assembly, monomer. The cofactor is FMN.

It localises to the cell membrane. The catalysed reaction is (S)-dihydroorotate + a quinone = orotate + a quinol. Its pathway is pyrimidine metabolism; UMP biosynthesis via de novo pathway; orotate from (S)-dihydroorotate (quinone route): step 1/1. Its function is as follows. Catalyzes the conversion of dihydroorotate to orotate with quinone as electron acceptor. The polypeptide is Dihydroorotate dehydrogenase (quinone) (Neisseria meningitidis serogroup C (strain 053442)).